A 644-amino-acid polypeptide reads, in one-letter code: Adhesion G-protein coupled receptor F2 (644 aa).

An N-terminal signal peptide occupies residues Met-1–Ser-18. Residues Cys-19–Tyr-386 are Extracellular-facing. N-linked (GlcNAc...) asparagine glycosylation is found at Asn-155, Asn-219, Asn-293, and Asn-311. In terms of domain architecture, GAIN-B spans Ser-233–Glu-377. 2 disulfides stabilise this stretch: Cys-329–Cys-356 and Cys-344–Cys-358. Positions Cys-329 to Glu-377 are GPS. A helical transmembrane segment spans residues Ile-387–Trp-407. The Cytoplasmic portion of the chain corresponds to Ser-408–Cys-422. The helical transmembrane segment at Ile-423 to Leu-443 threads the bilayer. Residues Ser-444–Leu-465 are Extracellular-facing. The chain crosses the membrane as a helical span at residues Ser-466–Phe-486. Residues His-487–Cys-493 lie on the Cytoplasmic side of the membrane. The helical transmembrane segment at Leu-494–Leu-514 threads the bilayer. Residues Ala-515–Ala-541 are Extracellular-facing. The chain crosses the membrane as a helical span at residues Phe-542 to Ile-562. The Cytoplasmic segment spans residues Lys-563–Lys-585. Residues Asn-586 to Ile-606 form a helical membrane-spanning segment. The Extracellular segment spans residues Asn-607–Ser-610. A helical membrane pass occupies residues Leu-611 to Val-631.

It belongs to the G-protein coupled receptor 2 family. Adhesion G-protein coupled receptor (ADGR) subfamily. As to expression, mainly expressed in skin and heart, and very weakly in lung and spleen. Detected in all epidermal layers of skin.

Its subcellular location is the membrane. Its function is as follows. Orphan receptor. In Mus musculus (Mouse), this protein is Adhesion G-protein coupled receptor F2 (Adgrf2).